The sequence spans 1164 residues: DNA-directed RNA polymerase subunit beta (1164 aa).

The protein belongs to the RNA polymerase beta chain family. As to quaternary structure, the RNAP catalytic core consists of 2 alpha, 1 beta, 1 beta' and 1 omega subunit. When a sigma factor is associated with the core the holoenzyme is formed, which can initiate transcription.

It carries out the reaction RNA(n) + a ribonucleoside 5'-triphosphate = RNA(n+1) + diphosphate. In terms of biological role, DNA-dependent RNA polymerase catalyzes the transcription of DNA into RNA using the four ribonucleoside triphosphates as substrates. The protein is DNA-directed RNA polymerase subunit beta of Saccharopolyspora erythraea (strain ATCC 11635 / DSM 40517 / JCM 4748 / NBRC 13426 / NCIMB 8594 / NRRL 2338).